Reading from the N-terminus, the 623-residue chain is DNA mismatch repair protein MutL (623 aa).

Residues A353–S368 show a composition bias toward polar residues. The interval A353–H389 is disordered.

The protein belongs to the DNA mismatch repair MutL/HexB family.

In terms of biological role, this protein is involved in the repair of mismatches in DNA. It is required for dam-dependent methyl-directed DNA mismatch repair. May act as a 'molecular matchmaker', a protein that promotes the formation of a stable complex between two or more DNA-binding proteins in an ATP-dependent manner without itself being part of a final effector complex. In Brucella melitensis biotype 1 (strain ATCC 23456 / CCUG 17765 / NCTC 10094 / 16M), this protein is DNA mismatch repair protein MutL.